The chain runs to 142 residues: Transcriptional regulator MraZ (142 aa).

SpoVT-AbrB domains follow at residues 5–47 (THSP…SERE) and 76–119 (ASDE…DAQA).

It belongs to the MraZ family. In terms of assembly, forms oligomers.

It is found in the cytoplasm. The protein resides in the nucleoid. In Arthrobacter sp. (strain FB24), this protein is Transcriptional regulator MraZ.